The sequence spans 281 residues: sn-glycerol-3-phosphate transport system permease protein UgpE (281 aa).

A run of 6 helical transmembrane segments spans residues L16–L36, F85–F105, F113–V133, L142–F162, A202–I222, and W247–V267. In terms of domain architecture, ABC transmembrane type-1 spans L77–M268.

Belongs to the binding-protein-dependent transport system permease family. UgpAE subfamily. As to quaternary structure, the complex is composed of two ATP-binding proteins (UgpC), two transmembrane proteins (UgpA and UgpE) and a solute-binding protein (UgpB).

The protein localises to the cell inner membrane. Its function is as follows. Part of the ABC transporter complex UgpBAEC involved in sn-glycerol-3-phosphate (G3P) import. Probably responsible for the translocation of the substrate across the membrane. The chain is sn-glycerol-3-phosphate transport system permease protein UgpE (ugpE) from Escherichia coli O157:H7.